Here is a 111-residue protein sequence, read N- to C-terminus: NADH-ubiquinone oxidoreductase chain 4 (111 aa).

The helical transmembrane segment at 35–55 threads the bilayer; that stretch reads LITSLFSWLDITVFLTGLSAF.

It belongs to the complex I subunit 4 family.

Its subcellular location is the mitochondrion membrane. The enzyme catalyses a ubiquinone + NADH + 5 H(+)(in) = a ubiquinol + NAD(+) + 4 H(+)(out). Functionally, core subunit of the mitochondrial membrane respiratory chain NADH dehydrogenase (Complex I) that is believed to belong to the minimal assembly required for catalysis. Complex I functions in the transfer of electrons from NADH to the respiratory chain. The immediate electron acceptor for the enzyme is believed to be ubiquinone. The polypeptide is NADH-ubiquinone oxidoreductase chain 4 (MT-ND4) (Caiman crocodilus (Spectacled caiman)).